The primary structure comprises 417 residues: NADH-quinone oxidoreductase subunit D (417 aa).

This sequence belongs to the complex I 49 kDa subunit family. As to quaternary structure, NDH-1 is composed of 14 different subunits. Subunits NuoB, C, D, E, F, and G constitute the peripheral sector of the complex.

It is found in the cell inner membrane. It carries out the reaction a quinone + NADH + 5 H(+)(in) = a quinol + NAD(+) + 4 H(+)(out). Its function is as follows. NDH-1 shuttles electrons from NADH, via FMN and iron-sulfur (Fe-S) centers, to quinones in the respiratory chain. The immediate electron acceptor for the enzyme in this species is believed to be ubiquinone. Couples the redox reaction to proton translocation (for every two electrons transferred, four hydrogen ions are translocated across the cytoplasmic membrane), and thus conserves the redox energy in a proton gradient. This chain is NADH-quinone oxidoreductase subunit D, found in Burkholderia lata (strain ATCC 17760 / DSM 23089 / LMG 22485 / NCIMB 9086 / R18194 / 383).